We begin with the raw amino-acid sequence, 604 residues long: ATP-dependent RNA helicase DBP1 (604 aa).

Positions 1 to 79 (MSDGSGRYVP…RASGSGGFGG (79 aa)) are disordered. Over residues 32–45 (SRYSGNGFFSSPNR) the composition is skewed to polar residues. Residues 138–166 (TEFKSPPLDELLLENVELANFSKPTPVQK) carry the Q motif motif. Positions 169 to 358 (IPIVTKNRDL…RDFLKDYIFL (190 aa)) constitute a Helicase ATP-binding domain. An ATP-binding site is contributed by 182–189 (AQTGSGKT). Residues 302–305 (DEAD) carry the DEAD box motif. In terms of domain architecture, Helicase C-terminal spans 386–529 (LLDILINEID…EVPQFLVNMV (144 aa)). Residues 535–591 (FGRGGRNSRTGSNRGRGSNTRDYRHSNKDDWGSLGSSRRGFRSNDNRGFGNNWGSSS) are disordered. The span at 541–552 (NSRTGSNRGRGS) shows a compositional bias: low complexity. The segment covering 553 to 565 (NTRDYRHSNKDDW) has biased composition (basic and acidic residues).

Belongs to the DEAD box helicase family. DDX3/DED1 subfamily.

The protein localises to the cytoplasm. The enzyme catalyses ATP + H2O = ADP + phosphate + H(+). ATP-binding RNA helicase involved in translation initiation. Remodels RNA in response to ADP and ATP concentrations by facilitating disruption, but also formation of RNA duplexes. Redundant to DED1, may be required in conditions in which DED1 expression is decreased. The chain is ATP-dependent RNA helicase DBP1 (DBP1) from Candida glabrata (strain ATCC 2001 / BCRC 20586 / JCM 3761 / NBRC 0622 / NRRL Y-65 / CBS 138) (Yeast).